Here is a 111-residue protein sequence, read N- to C-terminus: Putative FAD-linked sulfhydryl oxidase 347L (111 aa).

Residues 2-109 (TDIDPHIWGP…LPESVARKKW (108 aa)) form the ERV/ALR sulfhydryl oxidase domain. An intrachain disulfide couples Cys-49 to Cys-52.

The protein belongs to the IIV-6 347L family. Requires FAD as cofactor.

It carries out the reaction 2 R'C(R)SH + O2 = R'C(R)S-S(R)CR' + H2O2. In terms of biological role, FAD-dependent sulfhydryl oxidase that catalyzes disulfide bond formation. This Invertebrate iridescent virus 6 (IIV-6) protein is Putative FAD-linked sulfhydryl oxidase 347L.